The chain runs to 378 residues: Copper-containing nitrite reductase (378 aa).

The tat-type signal signal peptide spans 1 to 38 (MTEQLQMTRRTMLAGAALAGAVAPLLHTAQAHAAGAAA). Plastocyanin-like domains lie at 39 to 213 (AAGA…YDKI) and 214 to 378 (YYVG…PASM). Residues H133, H138, H173, C174, H183, M188, and H344 each coordinate Cu cation.

Belongs to the multicopper oxidase family. Homotrimer. It depends on Cu(+) as a cofactor. Cu(2+) serves as cofactor. Requires FAD as cofactor. In terms of processing, predicted to be exported by the Tat system. The position of the signal peptide cleavage has been experimentally proven.

The protein resides in the periplasm. It catalyses the reaction nitric oxide + Fe(III)-[cytochrome c] + H2O = Fe(II)-[cytochrome c] + nitrite + 2 H(+). It functions in the pathway nitrogen metabolism; nitrate reduction (denitrification); dinitrogen from nitrate: step 2/4. In Achromobacter cycloclastes, this protein is Copper-containing nitrite reductase (nirK).